A 579-amino-acid chain; its full sequence is 2-isopropylmalate synthase (579 aa).

Positions 40–314 (PRWCAVDLRD…DPMIDFSDID (275 aa)) constitute a Pyruvate carboxyltransferase domain. Residues D49, H253, H255, and N289 each contribute to the Mg(2+) site. Residues 456–579 (SGKADGQWGR…VNRAIRDAQS (124 aa)) form a regulatory domain region.

This sequence belongs to the alpha-IPM synthase/homocitrate synthase family. LeuA type 2 subfamily. In terms of assembly, homodimer. Mg(2+) is required as a cofactor.

The protein localises to the cytoplasm. It carries out the reaction 3-methyl-2-oxobutanoate + acetyl-CoA + H2O = (2S)-2-isopropylmalate + CoA + H(+). Its pathway is amino-acid biosynthesis; L-leucine biosynthesis; L-leucine from 3-methyl-2-oxobutanoate: step 1/4. In terms of biological role, catalyzes the condensation of the acetyl group of acetyl-CoA with 3-methyl-2-oxobutanoate (2-ketoisovalerate) to form 3-carboxy-3-hydroxy-4-methylpentanoate (2-isopropylmalate). This Pseudarthrobacter chlorophenolicus (strain ATCC 700700 / DSM 12829 / CIP 107037 / JCM 12360 / KCTC 9906 / NCIMB 13794 / A6) (Arthrobacter chlorophenolicus) protein is 2-isopropylmalate synthase.